A 577-amino-acid chain; its full sequence is Sensor histidine kinase YesM (577 aa).

Topologically, residues 1–17 (MKKRVAGWYRRMKIKDK) are cytoplasmic. The chain crosses the membrane as a helical span at residues 18 to 38 (LFVFLSLIMAVSFLFVYSGVQ). Residues 39–286 (YAFHVYDEQI…PFDQMFAKIS (248 aa)) are Extracellular-facing. A helical membrane pass occupies residues 287–307 (FMKTVIGTCFLLFFCVVLLFG). Residues 308–577 (RKIANSITEP…ITIPCRNEVV (270 aa)) are Cytoplasmic-facing. An HAMP domain is found at 312 to 368 (NSITEPIEQLVTAMKSVQHSGIEAGVSLSLPEHTQDEAGMLNRHFTVMMKRINELME). Residues 365–574 (ELMEENVEKQ…RIVITIPCRN (210 aa)) enclose the Histidine kinase domain. Phosphohistidine; by autocatalysis is present on histidine 392.

It is found in the cell membrane. The enzyme catalyses ATP + protein L-histidine = ADP + protein N-phospho-L-histidine.. Member of the two-component regulatory system YesM/YesN. Probably activates YesN by phosphorylation. The chain is Sensor histidine kinase YesM (yesM) from Bacillus subtilis (strain 168).